A 353-amino-acid polypeptide reads, in one-letter code: Tsukushi (353 aa).

An N-terminal signal peptide occupies residues 1–17; sequence MLCTLFLLLLALGIVQT. Positions 18–59 constitute an LRRNT domain; sequence TRPCFPGCQCEEETFGLFDSFSLIRVDCSSLGPHIVPVPIPL. 10 LRR repeats span residues 60 to 80, 86 to 107, 110 to 131, 133 to 154, 160 to 180, 186 to 207, 208 to 228, 231 to 253, 256 to 277, and 281 to 302; these read DTAH…SVLG, TLAG…AFSR, YLES…VFTS, PLSD…AFTT, ALHV…PARA, TIQS…RDLP, LRYL…AFMG, GLTH…GFRE, GLQV…EVFS, and LLQE…LLHH. Asn-75 carries N-linked (GlcNAc...) asparagine glycosylation. N-linked (GlcNAc...) asparagine glycosylation occurs at Asn-138. Residue Asn-191 is glycosylated (N-linked (GlcNAc...) asparagine).

As to quaternary structure, interacts with FZD4 (via FZ domain); competes with WNT2B for binding to FZD4, inhibiting Wnt signaling and repressing peripheral eye development. Interacts with TGFB1; the interaction contributes to regulation of the hair cycle. Interacts with netrin. Interacts with CCN2. In terms of tissue distribution, expressed at high levels in the liver, small intestine and placenta. Not or barely detectable in other tissues, including whole pancreas, adipose tissues, skeletal muscle, kidney, spleen, brain, lung and testis.

The protein localises to the secreted. Contributes to various developmental events and other processes such as wound healing and cholesterol homeostasis through its interactions with multiple signaling pathways. Wnt signaling inhibitor which competes with WNT2B for binding to Wnt receptor FZD4 and represses WNT2B-dependent development of the peripheral eye. Plays a role in regulating the hair cycle by controlling TGFB1 signaling. Required for the development of the anterior commissure in the brain by inhibiting neurite outgrowth. Essential for terminal differentiation of hippocampal neural stem cells. Plays a role in regulating bone elongation and bone mass by modulating growth plate chondrocyte function and overall body size. Required for development of the inner ear through its involvement in stereocilia formation in inner hair cells. Facilitates wound healing by inhibiting secretion of TGFB1 from macrophages which prevents myofibroblast differentiation, maintaining inflammatory cell quiescence. Plays a role in cholesterol homeostasis by reducing circulating high-density lipoprotein cholesterol, lowering cholesterol efflux capacity and decreasing cholesterol-to-bile acid conversion in the liver. In one study, shown to negatively regulate sympathetic innervation in brown fat, leading to reduced energy expenditure. In another study, shown not to affect brown fat thermogenic capacity, body weight gain or glucose homeostasis. This Rattus norvegicus (Rat) protein is Tsukushi (Tsku).